We begin with the raw amino-acid sequence, 315 residues long: Beta-ketoacyl-[acyl-carrier-protein] synthase III (315 aa).

Catalysis depends on residues cysteine 115 and histidine 244. The interval 245–249 (QANAR) is ACP-binding. Residue asparagine 274 is part of the active site.

The protein belongs to the thiolase-like superfamily. FabH family. In terms of assembly, homodimer.

The protein localises to the cytoplasm. It carries out the reaction malonyl-[ACP] + acetyl-CoA + H(+) = 3-oxobutanoyl-[ACP] + CO2 + CoA. It participates in lipid metabolism; fatty acid biosynthesis. Functionally, catalyzes the condensation reaction of fatty acid synthesis by the addition to an acyl acceptor of two carbons from malonyl-ACP. Catalyzes the first condensation reaction which initiates fatty acid synthesis and may therefore play a role in governing the total rate of fatty acid production. Possesses both acetoacetyl-ACP synthase and acetyl transacylase activities. Its substrate specificity determines the biosynthesis of branched-chain and/or straight-chain of fatty acids. This Rubrobacter xylanophilus (strain DSM 9941 / JCM 11954 / NBRC 16129 / PRD-1) protein is Beta-ketoacyl-[acyl-carrier-protein] synthase III.